We begin with the raw amino-acid sequence, 557 residues long: Urocanate hydratase (557 aa).

NAD(+) contacts are provided by residues 53–54 (GG), glutamine 131, 177–179 (GMG), 197–202 (ECQQSR), 243–244 (NA), 264–268 (QTSAH), 274–275 (YL), and 323–324 (YG). The active site involves cysteine 411. NAD(+) contacts are provided by residues 455-456 (RE) and glycine 493.

In terms of assembly, homodimer. Requires NAD(+) as cofactor.

The protein localises to the cytoplasm. The enzyme catalyses 4-imidazolone-5-propanoate = trans-urocanate + H2O. It functions in the pathway amino-acid degradation; L-histidine degradation into L-glutamate; N-formimidoyl-L-glutamate from L-histidine: step 2/3. Its function is as follows. Catalyzes the conversion of urocanate to 4-imidazolone-5-propionate. This chain is Urocanate hydratase, found in Pseudomonas putida (Arthrobacter siderocapsulatus).